The primary structure comprises 261 residues: Methyl jasmonate esterase 1 (261 aa).

The AB hydrolase-1 domain maps to 8-251 (FVLVHGACHG…MFSKPLDLCA (244 aa)). Ser82 (acyl-ester intermediate) is an active-site residue. Catalysis depends on charge relay system residues Asp211 and His239.

Belongs to the AB hydrolase superfamily. Methylesterase family. Homodimer.

The enzyme catalyses methyl (-)-jasmonate + H2O = jasmonate + methanol + H(+). It catalyses the reaction methyl salicylate + H2O = salicylate + methanol + H(+). The protein operates within plant hormone biosynthesis. Its pathway is lipid metabolism; oxylipin biosynthesis. In terms of biological role, methylesterase that catalyzes the hydrolysis of methyl jasmonate (MeJA) into jasmonate (JA). Can also use methyl salicylate (MeSA) as substrate with a lower efficiency. This Vitis vinifera (Grape) protein is Methyl jasmonate esterase 1.